The following is a 212-amino-acid chain: ATP synthase subunit 5, mitochondrial (212 aa).

The transit peptide at 1–17 (MFNRVFTRSFASSLRAA) directs the protein to the mitochondrion.

The protein belongs to the ATPase delta chain family. F-type ATPases have 2 components, CF(1) - the catalytic core - and CF(0) - the membrane proton channel. CF(1) has five subunits: alpha(3), beta(3), gamma(1), delta(1), epsilon(1). CF(0) has three main subunits: a, b and c.

It localises to the mitochondrion. It is found in the mitochondrion inner membrane. Its function is as follows. Mitochondrial membrane ATP synthase (F(1)F(0) ATP synthase or Complex V) produces ATP from ADP in the presence of a proton gradient across the membrane which is generated by electron transport complexes of the respiratory chain. F-type ATPases consist of two structural domains, F(1) - containing the extramembraneous catalytic core and F(0) - containing the membrane proton channel, linked together by a central stalk and a peripheral stalk. During catalysis, ATP synthesis in the catalytic domain of F(1) is coupled via a rotary mechanism of the central stalk subunits to proton translocation. Part of the complex F(0) domain and the peripheric stalk, which acts as a stator to hold the catalytic alpha(3)beta(3) subcomplex and subunit a/ATP6 static relative to the rotary elements. This chain is ATP synthase subunit 5, mitochondrial (ATP5), found in Saccharomyces cerevisiae (strain ATCC 204508 / S288c) (Baker's yeast).